Consider the following 503-residue polypeptide: Probable protein kinase UbiB (503 aa).

Residues 13–35 traverse the membrane as a helical segment; that stretch reads TFYRYRLAGLCASLMGSGWICAL. One can recognise a Protein kinase domain in the interval 120-491; that stretch reads EFETEPIASA…QQRQSLWLAV (372 aa). ATP is bound by residues 126 to 134 and K148; that span reads IASASIAQV. D283 serves as the catalytic Proton acceptor. A helical transmembrane segment spans residues 485–502; the sequence is QSLWLAVIAVVLLLILLL.

The protein belongs to the ABC1 family. UbiB subfamily.

Its subcellular location is the cell inner membrane. It functions in the pathway cofactor biosynthesis; ubiquinone biosynthesis [regulation]. Its function is as follows. Is probably a protein kinase regulator of UbiI activity which is involved in aerobic coenzyme Q (ubiquinone) biosynthesis. This Neisseria meningitidis serogroup B (strain ATCC BAA-335 / MC58) protein is Probable protein kinase UbiB.